The sequence spans 434 residues: MKNWRTLILGLVICANTAFAAPQEVDKVAAVVDNGVVLQSDIDGLLQSVKMNAQQSGQQVPDDSTLRHQILERLIMDNIQLQMAKKMGITITDQALDKAIADIAAQNRMTLAQMRSRLAADGLSYDTYREQIRKEMLTSEVRNNEVRRRITILPQEVESLAKQMGNQVSGDTELNLSHILIPLPENPTQQQVDQAEDLANKLVADIKGGADFGKLAIANSADSQALKGGQMGWGKLQELPSLFAERLQSAHKGEIVGPIRSGVGFHILKVNDMRGADQTISVTEVNARHILLKPSPMMTDEQARAKLEAAAAEIKSGKTSFATIAKEISQDPGSAMQGGELGWASPDIYDPAFRDALMKLKKGEISAPVHSSFGWHLIQLVDTRQVDKTDAAQKERAYRMLFNRKFAEEAQTWMQEQRAAAYVKILDGSNAQPQ.

The signal sequence occupies residues 1 to 20; the sequence is MKNWRTLILGLVICANTAFA. PpiC domains are found at residues 171-272 and 282-382; these read DTEL…KVND and VTEV…QLVD.

The protein resides in the periplasm. The catalysed reaction is [protein]-peptidylproline (omega=180) = [protein]-peptidylproline (omega=0). Chaperone involved in the correct folding and assembly of outer membrane proteins. Recognizes specific patterns of aromatic residues and the orientation of their side chains, which are found more frequently in integral outer membrane proteins. May act in both early periplasmic and late outer membrane-associated steps of protein maturation. This is Chaperone SurA from Yersinia pestis bv. Antiqua (strain Nepal516).